The chain runs to 317 residues: ATP synthase gamma chain (317 aa).

The protein belongs to the ATPase gamma chain family. As to quaternary structure, F-type ATPases have 2 components, CF(1) - the catalytic core - and CF(0) - the membrane proton channel. CF(1) has five subunits: alpha(3), beta(3), gamma(1), delta(1), epsilon(1). CF(0) has three main subunits: a, b and c.

It localises to the cellular thylakoid membrane. Its function is as follows. Produces ATP from ADP in the presence of a proton gradient across the membrane. The gamma chain is believed to be important in regulating ATPase activity and the flow of protons through the CF(0) complex. This is ATP synthase gamma chain from Synechococcus sp. (strain CC9311).